Here is a 134-residue protein sequence, read N- to C-terminus: uncharacterized protein (134 aa).

A signal peptide spans 1–23 (MWHLRCSNWRGSGVFGMCFSLSG). Cysteine 24 is lipidated: N-palmitoyl cysteine. Residue cysteine 24 is the site of S-diacylglycerol cysteine attachment.

It localises to the cell membrane. This is an uncharacterized protein from Treponema pallidum (strain Nichols).